We begin with the raw amino-acid sequence, 452 residues long: NADH-quinone oxidoreductase subunit N 2 (452 aa).

14 consecutive transmembrane segments (helical) span residues 6–26 (VLIPEISLLILAIISFFYGFI), 33–53 (TYILSFLSILTAIILSVFNFG), 70–90 (TLRILVLFIGVFIIGLSYSDL), 97–117 (SVEYVFLLLLSLFGMNLMIVA), 120–140 (LLILYLALETFSLSLYILAGF), 154–174 (YFILGTLSSIILLGSIVFFYA), 194–214 (ILLGVVFLISAFAFKLSLAPF), 232–252 (FLSTAPKVAVFGALINIFLSI), 258–278 (IQDLIVIISALSMLVGNVLAL), 286–306 (MLAYSSIAHAGYMFMAFLLPE), 311–331 (ISLIPYLIVYVFMNLSAFAFI), 355–375 (FCIIVIMFSLTGVPPTAGFIV), 387–407 (GYGSLVFFALLMSIFSAFYYL), and 432–452 (ALSGALLLIFLGLFPNLLLIF).

The protein belongs to the complex I subunit 2 family. In terms of assembly, NDH-1 is composed of 14 different subunits. Subunits NuoA, H, J, K, L, M, N constitute the membrane sector of the complex.

It localises to the cell inner membrane. The catalysed reaction is a quinone + NADH + 5 H(+)(in) = a quinol + NAD(+) + 4 H(+)(out). In terms of biological role, NDH-1 shuttles electrons from NADH, via FMN and iron-sulfur (Fe-S) centers, to quinones in the respiratory chain. The immediate electron acceptor for the enzyme in this species is believed to be ubiquinone. Couples the redox reaction to proton translocation (for every two electrons transferred, four hydrogen ions are translocated across the cytoplasmic membrane), and thus conserves the redox energy in a proton gradient. The sequence is that of NADH-quinone oxidoreductase subunit N 2 from Thermodesulfovibrio yellowstonii (strain ATCC 51303 / DSM 11347 / YP87).